A 449-amino-acid chain; its full sequence is Phosphoglucosamine mutase (449 aa).

Ser-101 serves as the catalytic Phosphoserine intermediate. Mg(2+) is bound by residues Ser-101, Asp-241, Asp-243, and Asp-245. Ser-101 is subject to Phosphoserine.

This sequence belongs to the phosphohexose mutase family. Mg(2+) serves as cofactor. Post-translationally, activated by phosphorylation.

It catalyses the reaction alpha-D-glucosamine 1-phosphate = D-glucosamine 6-phosphate. Catalyzes the conversion of glucosamine-6-phosphate to glucosamine-1-phosphate. The sequence is that of Phosphoglucosamine mutase from Acetivibrio thermocellus (strain ATCC 27405 / DSM 1237 / JCM 9322 / NBRC 103400 / NCIMB 10682 / NRRL B-4536 / VPI 7372) (Clostridium thermocellum).